Consider the following 414-residue polypeptide: 3-phosphoshikimate 1-carboxyvinyltransferase (414 aa).

Residues Lys-20, Ser-21, and Arg-25 each contribute to the 3-phosphoshikimate site. Lys-20 contacts phosphoenolpyruvate. Arg-113 lines the phosphoenolpyruvate pocket. Residues Ser-154, Ser-155, Gln-156, Ser-181, Asp-296, and Lys-323 each coordinate 3-phosphoshikimate. A phosphoenolpyruvate-binding site is contributed by Gln-156. The active-site Proton acceptor is Asp-296. Phosphoenolpyruvate is bound by residues Arg-327, Arg-371, and Lys-395.

It belongs to the EPSP synthase family. As to quaternary structure, monomer.

It localises to the cytoplasm. The enzyme catalyses 3-phosphoshikimate + phosphoenolpyruvate = 5-O-(1-carboxyvinyl)-3-phosphoshikimate + phosphate. The protein operates within metabolic intermediate biosynthesis; chorismate biosynthesis. In terms of biological role, catalyzes the transfer of the enolpyruvyl moiety of phosphoenolpyruvate (PEP) to the 5-hydroxyl of shikimate-3-phosphate (S3P) to produce enolpyruvyl shikimate-3-phosphate and inorganic phosphate. The chain is 3-phosphoshikimate 1-carboxyvinyltransferase from Saccharolobus solfataricus (strain ATCC 35092 / DSM 1617 / JCM 11322 / P2) (Sulfolobus solfataricus).